Consider the following 66-residue polypeptide: Surface composition regulator (66 aa).

This sequence belongs to the GlgS family.

Its function is as follows. Major determinant of cell surface composition. Negatively regulates motility, adhesion and synthesis of biofilm exopolysaccharides. This Shigella dysenteriae serotype 1 (strain Sd197) protein is Surface composition regulator.